Here is a 404-residue protein sequence, read N- to C-terminus: UPF0261 protein CTC_01794 (404 aa).

This sequence belongs to the UPF0261 family.

The chain is UPF0261 protein CTC_01794 from Clostridium tetani (strain Massachusetts / E88).